Reading from the N-terminus, the 265-residue chain is 3-methyl-2-oxobutanoate hydroxymethyltransferase (265 aa).

The Mg(2+) site is built by aspartate 43 and aspartate 82. Residues 43-44 (DS), aspartate 82, and lysine 111 contribute to the 3-methyl-2-oxobutanoate site. Residue glutamate 113 participates in Mg(2+) binding. The active-site Proton acceptor is glutamate 180.

The protein belongs to the PanB family. As to quaternary structure, homodecamer; pentamer of dimers. The cofactor is Mg(2+).

The protein resides in the cytoplasm. It catalyses the reaction 3-methyl-2-oxobutanoate + (6R)-5,10-methylene-5,6,7,8-tetrahydrofolate + H2O = 2-dehydropantoate + (6S)-5,6,7,8-tetrahydrofolate. The protein operates within cofactor biosynthesis; (R)-pantothenate biosynthesis; (R)-pantoate from 3-methyl-2-oxobutanoate: step 1/2. In terms of biological role, catalyzes the reversible reaction in which hydroxymethyl group from 5,10-methylenetetrahydrofolate is transferred onto alpha-ketoisovalerate to form ketopantoate. The chain is 3-methyl-2-oxobutanoate hydroxymethyltransferase from Francisella tularensis subsp. novicida (strain U112).